The sequence spans 411 residues: MAATEILNRADIVKAPQVRLAPQPEKPSLIGLLRDDIAKLLAEKGVPERQVKMRVSQLWHWLYVRGVSDFDEMSNVSKDMREMLKEHFTIARPDIVEEQVSGDGTRKWLLRFPPRGAGRPVEIETVYIPEEGRGTLCISSQVGCTLTCSFCHTGTQKLVRNLTAEEILSQLLLARDRLGDFPERDTPQGAIVPAEGRKITNIVMMGMGEPLYNFENVKTALLIASDGDGLSLSKRRITLSTSGIVPEIYRTGEEIGVMLAISLHAVRDDLRDMLVPINKKYPLKQLMEACRAYPGLSNARRITFEYVMLKDVNDSLEDAKELVKLLKGIPAKINLIPFNPWPGTNYQCSDWEQIEKFADFINQAGYASPIRTPRGRDILAACGQLKSESERMRKVDRLAFEAMMIANHGED.

E124 serves as the catalytic Proton acceptor. Residues 130–379 (EEGRGTLCIS…IRTPRGRDIL (250 aa)) form the Radical SAM core domain. Cysteines 137 and 382 form a disulfide. [4Fe-4S] cluster-binding residues include C144, C148, and C151. S-adenosyl-L-methionine is bound by residues 208–209 (GE), S240, 262–264 (SLH), and N339. Catalysis depends on C382, which acts as the S-methylcysteine intermediate.

It belongs to the radical SAM superfamily. RlmN family. Requires [4Fe-4S] cluster as cofactor.

It localises to the cytoplasm. It catalyses the reaction adenosine(2503) in 23S rRNA + 2 reduced [2Fe-2S]-[ferredoxin] + 2 S-adenosyl-L-methionine = 2-methyladenosine(2503) in 23S rRNA + 5'-deoxyadenosine + L-methionine + 2 oxidized [2Fe-2S]-[ferredoxin] + S-adenosyl-L-homocysteine. It carries out the reaction adenosine(37) in tRNA + 2 reduced [2Fe-2S]-[ferredoxin] + 2 S-adenosyl-L-methionine = 2-methyladenosine(37) in tRNA + 5'-deoxyadenosine + L-methionine + 2 oxidized [2Fe-2S]-[ferredoxin] + S-adenosyl-L-homocysteine. Functionally, specifically methylates position 2 of adenine 2503 in 23S rRNA and position 2 of adenine 37 in tRNAs. m2A2503 modification seems to play a crucial role in the proofreading step occurring at the peptidyl transferase center and thus would serve to optimize ribosomal fidelity. In Rhizobium meliloti (strain 1021) (Ensifer meliloti), this protein is Dual-specificity RNA methyltransferase RlmN.